We begin with the raw amino-acid sequence, 423 residues long: Maltoporin 1 (423 aa).

The first 24 residues, 1–24 (MITLRKLPIALAVAAGVLSTQAMA), serve as a signal peptide directing secretion.

This sequence belongs to the porin LamB (TC 1.B.3) family. As to quaternary structure, homotrimer formed of three 18-stranded antiparallel beta-barrels, containing three independent channels.

The protein localises to the cell outer membrane. The enzyme catalyses beta-maltose(in) = beta-maltose(out). In terms of biological role, involved in the transport of maltose and maltodextrins. The polypeptide is Maltoporin 1 (Yersinia pestis bv. Antiqua (strain Antiqua)).